A 221-amino-acid chain; its full sequence is ATP phosphoribosyltransferase (221 aa).

This sequence belongs to the ATP phosphoribosyltransferase family. Short subfamily. In terms of assembly, heteromultimer composed of HisG and HisZ subunits.

The protein localises to the cytoplasm. It catalyses the reaction 1-(5-phospho-beta-D-ribosyl)-ATP + diphosphate = 5-phospho-alpha-D-ribose 1-diphosphate + ATP. Its pathway is amino-acid biosynthesis; L-histidine biosynthesis; L-histidine from 5-phospho-alpha-D-ribose 1-diphosphate: step 1/9. Functionally, catalyzes the condensation of ATP and 5-phosphoribose 1-diphosphate to form N'-(5'-phosphoribosyl)-ATP (PR-ATP). Has a crucial role in the pathway because the rate of histidine biosynthesis seems to be controlled primarily by regulation of HisG enzymatic activity. The sequence is that of ATP phosphoribosyltransferase from Symbiobacterium thermophilum (strain DSM 24528 / JCM 14929 / IAM 14863 / T).